Reading from the N-terminus, the 1722-residue chain is Signal-induced proliferation-associated 1-like protein 2 (1722 aa).

Disordered stretches follow at residues 1–29 (MSDP…RAMQ) and 45–73 (MGPA…PAVP). The span at 57–66 (EGGGGGGGPA) shows a compositional bias: gly residues. Phosphoserine is present on residues serine 149, serine 380, and serine 384. A disordered region spans residues 362 to 404 (ASAASQTPVPVGPAGGCESPLGSKEDLNAKENPDADEGDGKSN). Residues 384-403 (SKEDLNAKENPDADEGDGKS) show a composition bias toward basic and acidic residues. The 218-residue stretch at 596-813 (LLKLDEQGLS…RTRHEYLKDL (218 aa)) folds into the Rap-GAP domain. Positions 951–1027 (EMTLRRNGLG…VKVVIIQPHE (77 aa)) constitute a PDZ domain. Serine 1030 carries the post-translational modification Phosphoserine. 3 disordered regions span residues 1068 to 1172 (HRVP…DHED), 1197 to 1246 (ERAL…FGSG), and 1328 to 1361 (AADG…KSTG). Composition is skewed to low complexity over residues 1091-1103 (LQCQ…AQAA) and 1120-1131 (SSPSNQSSSSDP). The segment covering 1197 to 1218 (ERALQKDGSCKDSPNKLSHIGD) has biased composition (basic and acidic residues). A compositionally biased stretch (low complexity) spans 1220 to 1237 (SCSSHSSSNTLSSNTSSN). Serine 1245 is modified (phosphoserine). Residues 1328-1355 (AADGSMGDLSEVSSHSSGSHRSGSPSTH) show a composition bias toward low complexity. Serine 1461, serine 1472, serine 1478, serine 1488, serine 1549, serine 1552, and serine 1591 each carry phosphoserine. Positions 1652-1712 (STLTGKVNQL…ATAQLRTFTE (61 aa)) form a coiled coil.

The sequence is that of Signal-induced proliferation-associated 1-like protein 2 (Sipa1l2) from Rattus norvegicus (Rat).